The following is a 71-amino-acid chain: Conotoxin AbVIG (71 aa).

An N-terminal signal peptide occupies residues 1-17 (VLIIAVLFLTACQLTTA). Residues 18–40 (ETSSRGKQKHRALRSTDKNSRMT) constitute a propeptide that is removed on maturation. Intrachain disulfides connect Cys-43/Cys-57, Cys-50/Cys-61, and Cys-56/Cys-68.

It belongs to the conotoxin O1 superfamily. In terms of tissue distribution, expressed by the venom duct.

It localises to the secreted. This is Conotoxin AbVIG from Conus abbreviatus (Abbreviated cone).